Here is a 312-residue protein sequence, read N- to C-terminus: Tyrosine recombinase XerC (312 aa).

Residues 10–101 (PDLQAARESW…GIRSLLRFLE (92 aa)) enclose the Core-binding (CB) domain. Positions 122–306 (SLPKPLTASD…DTARLLEIYE (185 aa)) constitute a Tyr recombinase domain. Residues R165, K190, H258, R261, and H284 contribute to the active site. Y293 functions as the O-(3'-phospho-DNA)-tyrosine intermediate in the catalytic mechanism.

This sequence belongs to the 'phage' integrase family. XerC subfamily. As to quaternary structure, forms a cyclic heterotetrameric complex composed of two molecules of XerC and two molecules of XerD.

The protein localises to the cytoplasm. In terms of biological role, site-specific tyrosine recombinase, which acts by catalyzing the cutting and rejoining of the recombining DNA molecules. The XerC-XerD complex is essential to convert dimers of the bacterial chromosome into monomers to permit their segregation at cell division. It also contributes to the segregational stability of plasmids. The protein is Tyrosine recombinase XerC of Mesorhizobium japonicum (strain LMG 29417 / CECT 9101 / MAFF 303099) (Mesorhizobium loti (strain MAFF 303099)).